The primary structure comprises 101 residues: MAAKLKKGDKVVVLAGKDKGKEGEITSVSPKTGKAVVDGLNIAIRHTRQSQNSQGGRIPQAMPIDLSNLALVDSNGKPTRVGFRMEDGKKVRFAKTTGEVV.

This sequence belongs to the universal ribosomal protein uL24 family. In terms of assembly, part of the 50S ribosomal subunit.

In terms of biological role, one of two assembly initiator proteins, it binds directly to the 5'-end of the 23S rRNA, where it nucleates assembly of the 50S subunit. One of the proteins that surrounds the polypeptide exit tunnel on the outside of the subunit. The sequence is that of Large ribosomal subunit protein uL24 from Dinoroseobacter shibae (strain DSM 16493 / NCIMB 14021 / DFL 12).